A 501-amino-acid polypeptide reads, in one-letter code: Actin nucleation-promoting factor WASL (501 aa).

N-acetylserine is present on Ser-2. A WH1 domain is found at 31-138 (LGKKCVTMSS…KAVTDLLGRR (108 aa)). Disordered stretches follow at residues 135–158 (LGRR…PMAT) and 180–202 (SHTK…DIGT). A compositionally biased stretch (basic residues) spans 183-195 (KEKKKGKAKKKRL). In terms of domain architecture, CRIB spans 200 to 213 (IGTPSNFQHIGHVG). Ser-239 carries the post-translational modification Phosphoserine; by TNK2. Tyr-253 carries the post-translational modification Phosphotyrosine; by FAK1 and TNK2. 2 disordered regions span residues 263-405 (EAVK…KAAL) and 442-501 (QLKS…EWED). Composition is skewed to pro residues over residues 273–361 (APPP…PPPL) and 368–387 (APPP…PPGL). The residue at position 304 (Arg-304) is an Omega-N-methylarginine. WH2 domains are found at residues 401–418 (NKAA…LKKV) and 429–446 (GRDA…LKSV). Residues 442-453 (QLKSVSDGQEST) show a composition bias toward polar residues. Ser-480 and Ser-481 each carry phosphoserine. Acidic residues predominate over residues 482–501 (DEDEDDDDEEDFQDDDEWED).

As to quaternary structure, binds actin and the Arp2/3 complex. Interacts with CDC42. Interacts with FCHSD1. Interacts with FCHSD2. Binds to SH3 domains of GRB2. Interacts with the C-terminal SH3 domain of DNMBP. Interacts with SNX9. Interacts with the WW domains of PRPF40A/FBP11. Interacts with PTK2/FAK1. Interacts with PACSIN1, PACSIN2 and PACSIN3. Interacts with NOSTRIN. Binds to TNK2. Interacts with SNX33. Interacts with NONO (via second RRM domain); the interaction is direct. Component of a multiprotein complex with NONO and SFPQ; associates with the complex via direct interaction with NONO. Phosphorylation at Ser-239, Tyr-253, Ser-480 and Ser-481 enhances actin polymerization activity.

It localises to the cytoplasm. Its subcellular location is the cytoskeleton. The protein resides in the nucleus. Regulates actin polymerization by stimulating the actin-nucleating activity of the Arp2/3 complex. Involved in various processes, such as mitosis and cytokinesis, via its role in the regulation of actin polymerization. Together with CDC42, involved in the extension and maintenance of the formation of thin, actin-rich surface projections called filopodia. In addition to its role in the cytoplasm, also plays a role in the nucleus by regulating gene transcription, probably by promoting nuclear actin polymerization. Binds to HSF1/HSTF1 and forms a complex on heat shock promoter elements (HSE) that negatively regulates HSP90 expression. Plays a role in dendrite spine morphogenesis. The protein is Actin nucleation-promoting factor WASL (Wasl) of Rattus norvegicus (Rat).